The chain runs to 471 residues: Ribulose bisphosphate carboxylase large chain (471 aa).

At Lys5 the chain carries N6,N6,N6-trimethyllysine. The substrate site is built by Asn114 and Thr164. Lys166 (proton acceptor) is an active-site residue. Lys168 lines the substrate pocket. Mg(2+) is bound by residues Lys192, Asp194, and Glu195. Lys192 is modified (N6-carboxylysine). His285 serves as the catalytic Proton acceptor. Positions 286, 318, and 370 each coordinate substrate.

Belongs to the RuBisCO large chain family. Type I subfamily. In terms of assembly, heterohexadecamer of 8 large chains and 8 small chains; disulfide-linked. The disulfide link is formed within the large subunit homodimers. It depends on Mg(2+) as a cofactor. Post-translationally, the disulfide bond which can form in the large chain dimeric partners within the hexadecamer appears to be associated with oxidative stress and protein turnover.

Its subcellular location is the plastid. The protein localises to the chloroplast. It carries out the reaction 2 (2R)-3-phosphoglycerate + 2 H(+) = D-ribulose 1,5-bisphosphate + CO2 + H2O. The catalysed reaction is D-ribulose 1,5-bisphosphate + O2 = 2-phosphoglycolate + (2R)-3-phosphoglycerate + 2 H(+). Its function is as follows. RuBisCO catalyzes two reactions: the carboxylation of D-ribulose 1,5-bisphosphate, the primary event in carbon dioxide fixation, as well as the oxidative fragmentation of the pentose substrate in the photorespiration process. Both reactions occur simultaneously and in competition at the same active site. This chain is Ribulose bisphosphate carboxylase large chain, found in Strychnos nux-vomica (Poison nut).